The chain runs to 375 residues: Enoyl-[acyl-carrier-protein] reductase [NADH] 1, chloroplastic (375 aa).

The N-terminal 67 residues, 1 to 67 (MGASAATGMQ…SSKRSGVAIR (67 aa)), are a transit peptide targeting the chloroplast. Residues G91, Y98, 155 to 156 (DA), 202 to 203 (SL), and L252 contribute to the NAD(+) site. Catalysis depends on proton acceptor residues Y254 and Y264. NAD(+)-binding positions include K272 and 302–306 (LGSRA).

Belongs to the short-chain dehydrogenases/reductases (SDR) family. FabI subfamily. In terms of assembly, homotetramer.

It localises to the plastid. It is found in the chloroplast. It catalyses the reaction a 2,3-saturated acyl-[ACP] + NAD(+) = a (2E)-enoyl-[ACP] + NADH + H(+). The protein operates within lipid metabolism; fatty acid biosynthesis. Functionally, catalyzes the NAD-dependent reduction of a carbon-carbon double bond in an enoyl moiety that is covalently linked to an acyl carrier protein (ACP). Catalyzes the last reduction step in the de novo synthesis cycle of fatty acids. Involved in the elongation cycle of fatty acids which are used in lipid metabolism. Required for normal plant growth. The sequence is that of Enoyl-[acyl-carrier-protein] reductase [NADH] 1, chloroplastic from Oryza sativa subsp. japonica (Rice).